The primary structure comprises 301 residues: uncharacterized protein (301 aa).

Residues methionine 1–lysine 5 lie on the Extracellular side of the membrane. The helical transmembrane segment at phenylalanine 6 to isoleucine 26 threads the bilayer. The Cytoplasmic portion of the chain corresponds to leucine 27–arginine 112. The chain crosses the membrane as a helical span at residues valine 113 to isoleucine 133. At alanine 134–threonine 143 the chain is on the extracellular side. The helical transmembrane segment at alanine 144–leucine 164 threads the bilayer. The Cytoplasmic portion of the chain corresponds to tyrosine 165–glycine 191. Residues leucine 192–alanine 212 form a helical membrane-spanning segment. Residues threonine 213–serine 301 are Extracellular-facing. The tract at residues valine 254–serine 301 is disordered. Residues glutamine 261–threonine 275 are compositionally biased toward basic residues. Basic and acidic residues predominate over residues glutamate 282 to tyrosine 292.

The protein belongs to the SUR7 family.

The protein localises to the cell membrane. Functionally, involved in sporulation and affects the sphingolipid composition of the plasma membrane. This is an uncharacterized protein from Saccharomyces cerevisiae (strain ATCC 204508 / S288c) (Baker's yeast).